The chain runs to 912 residues: Non-lysosomal glucosylceramidase (912 aa).

Residues 886–912 are disordered; the sequence is HKKNSSRPAVTQGTAPSQPECGPKRSL. Positions 891–902 are enriched in polar residues; it reads SRPAVTQGTAPS.

It belongs to the non-lysosomal glucosylceramidase family.

The protein resides in the endoplasmic reticulum membrane. It is found in the golgi apparatus membrane. It carries out the reaction a beta-D-glucosyl-(1&lt;-&gt;1')-N-acylsphing-4-enine + H2O = an N-acylsphing-4-enine + D-glucose. It catalyses the reaction a beta-D-galactosyl-(1&lt;-&gt;1')-N-acylsphing-4-enine + H2O = an N-acylsphing-4-enine + D-galactose. The enzyme catalyses beta-D-glucosyl-(1-&gt;3)-O-lithocholate + H2O = lithocholate + D-glucose. The catalysed reaction is beta-D-glucosyl-(1-&gt;3)-O-chenodeoxycholate + H2O = chenodeoxycholate + D-glucose. It carries out the reaction a di-trans,poly-cis-dolichyl beta-D-glucosyl phosphate + chenodeoxycholate = beta-D-glucosyl-(1-&gt;3)-O-chenodeoxycholate + a di-trans,poly-cis-dolichyl phosphate + H(+). It catalyses the reaction octyl beta-D-glucose + chenodeoxycholate = beta-D-glucosyl-(1-&gt;3)-O-chenodeoxycholate + octan-1-ol. The enzyme catalyses cholesteryl 3-beta-D-glucoside + H2O = cholesterol + D-glucose. The catalysed reaction is a beta-D-glucosyl-(1&lt;-&gt;1')-N-acylsphing-4-enine + cholesterol = cholesteryl 3-beta-D-glucoside + an N-acylsphing-4-enine. It carries out the reaction beta-D-glucosyl-N-(9Z-octadecenoyl)-sphing-4E-enine + cholesterol = N-(9Z-octadecenoyl)-sphing-4-enine + cholesteryl 3-beta-D-glucoside. It catalyses the reaction a beta-D-galactosyl-(1&lt;-&gt;1')-N-acylsphing-4-enine + cholesterol = cholesteryl 3-beta-D-galactoside + an N-acylsphing-4-enine. The enzyme catalyses 1-(beta-D-galactosyl)-N-dodecanoylsphing-4-enine + cholesterol = cholesteryl 3-beta-D-galactoside + N-dodecanoylsphing-4-enine. Its pathway is lipid metabolism; sphingolipid metabolism. It functions in the pathway steroid metabolism; cholesterol metabolism. Enzymatic activity is dependent on membrane association and requires the presence of lipids. Functionally, non-lysosomal glucosylceramidase that catalyzes the hydrolysis of glucosylceramides/GlcCers (such as beta-D-glucosyl-(1&lt;-&gt;1')-N-acylsphing-4-enine) to free glucose and ceramides (such as N-acylsphing-4-enine). GlcCers are membrane glycosphingolipids that have a wide intracellular distribution. They are the main precursors of more complex glycosphingolipids that play a role in cellular growth, differentiation, adhesion, signaling, cytoskeletal dynamics and membrane properties. Involved in the transglucosylation of cholesterol, transfers glucose from GlcCer to cholesterol, thereby modifying its water solubility and biological properties. Under specific conditions, may catalyze the reverse reaction, transferring glucose from cholesteryl-3-beta-D-glucoside to ceramide (such as N-acylsphing-4-enine). May play a role in the metabolism of bile acids. Able to hydrolyze bile acid 3-O-glucosides as well as to produce bile acid-glucose conjugates thanks to a bile acid glucosyl transferase activity. Catalyzes the hydrolysis of galactosylceramides/GalCers (such as beta-D-galactosyl-(1&lt;-&gt;1')-N-acylsphing-4-enine), as well as the galactosyl transfer between GalCers and cholesterol in vitro with lower activity compared with their activity against GlcCers. This Rattus norvegicus (Rat) protein is Non-lysosomal glucosylceramidase.